Reading from the N-terminus, the 380-residue chain is Pectin lyase (380 aa).

Positions 1-20 are cleaved as a signal peptide; the sequence is MRSASILSAALAAFAPLASA. N-linked (GlcNAc...) asparagine glycosylation occurs at Asn-130.

This sequence belongs to the polysaccharide lyase 1 family.

The protein resides in the secreted. The catalysed reaction is Eliminative cleavage of (1-&gt;4)-alpha-D-galacturonan methyl ester to give oligosaccharides with 4-deoxy-6-O-methyl-alpha-D-galact-4-enuronosyl groups at their non-reducing ends.. The sequence is that of Pectin lyase (PNLA) from Colletotrichum gloeosporioides (Anthracnose fungus).